Consider the following 433-residue polypeptide: 23S rRNA (uracil(1939)-C(5))-methyltransferase RlmD (433 aa).

One can recognise a TRAM domain in the interval 1–53; that stretch reads MPVAVIESLDHEGRGVAHVDGKVVFVEGALAGEQVEYTVYRQRPSYDLAEATR. Positions 66, 72, 75, and 154 each coordinate [4Fe-4S] cluster. S-adenosyl-L-methionine contacts are provided by Gln263, Phe292, Asn297, Glu313, Asn341, and Asp362. Catalysis depends on Cys389, which acts as the Nucleophile.

It belongs to the class I-like SAM-binding methyltransferase superfamily. RNA M5U methyltransferase family. RlmD subfamily.

It carries out the reaction uridine(1939) in 23S rRNA + S-adenosyl-L-methionine = 5-methyluridine(1939) in 23S rRNA + S-adenosyl-L-homocysteine + H(+). In terms of biological role, catalyzes the formation of 5-methyl-uridine at position 1939 (m5U1939) in 23S rRNA. This Aromatoleum aromaticum (strain DSM 19018 / LMG 30748 / EbN1) (Azoarcus sp. (strain EbN1)) protein is 23S rRNA (uracil(1939)-C(5))-methyltransferase RlmD.